Consider the following 390-residue polypeptide: Transforming growth factor beta-1 proprotein (390 aa).

An N-terminal signal peptide occupies residues 1 to 29; that stretch reads MPPSGLRLLPLLLPLLWLLVLTPGRPAAG. The segment at 30–74 is straightjacket domain; sequence LSTCKTIDMELVKRKRIEAIRGQILSKLRLASPPSQGEVPPGPLP. The interval 75-271 is arm domain; it reads EAVLALYNST…ATPLERAQQL (197 aa). Asn-82, Asn-136, and Asn-176 each carry an N-linked (GlcNAc...) asparagine glycan. The segment at 226–252 is bowtie tail; the sequence is DSKDNTLRVGINGFSSSRRGDLATIDG. Positions 244 to 246 match the Cell attachment site motif; it reads RGD. 4 disulfides stabilise this stretch: Cys-285/Cys-294, Cys-293/Cys-356, Cys-322/Cys-387, and Cys-326/Cys-389.

This sequence belongs to the TGF-beta family. Homodimer; disulfide-linked. Interacts with the serine proteases, HTRA1 and HTRA3: the interaction with either inhibits TGFB1-mediated signaling and the HTRA protease activity is required for this inhibition. May interact with THSD4; this interaction may lead to sequestration by FBN1 microfibril assembly and attenuation of TGFB signaling. Interacts with CD109, DPT and ASPN. Interacts with EFEMP2. Interacts with TSKU; the interaction contributes to regulation of the hair cycle. Interacts with TGFBR3. As to quaternary structure, homodimer; disulfide-linked. Interacts with transforming growth factor beta-1 (TGF-beta-1) chain; interaction is non-covalent and maintains TGF-beta-1 in a latent state; each latency-associated peptide (LAP) monomer interacts with TGF-beta-1 in the other monomer. Interacts with LTBP1; leading to regulation of TGF-beta-1 activation. Interacts with LRRC32/GARP; leading to regulation of TGF-beta-1 activation on the surface of activated regulatory T-cells (Tregs). Interacts with LRRC33/NRROS; leading to regulation of TGF-beta-1 activation in macrophages and microglia. Interacts (via cell attachment site) with integrins ITGAV and ITGB6 (ITGAV:ITGB6), leading to release of the active TGF-beta-1. Latency-associated peptide: Interacts with NREP; the interaction results in a decrease in TGFB1 autoinduction. Interacts with HSP90AB1; inhibits latent TGFB1 activation. In terms of assembly, homodimer; disulfide-linked. Interacts with TGF-beta receptors (TGFBR1 and TGFBR2), leading to signal transduction. Post-translationally, transforming growth factor beta-1 proprotein: The precursor proprotein is cleaved in the Golgi apparatus by FURIN to form Transforming growth factor beta-1 (TGF-beta-1) and Latency-associated peptide (LAP) chains, which remain non-covalently linked, rendering TGF-beta-1 inactive. In terms of processing, N-glycosylated. Deglycosylation leads to activation of Transforming growth factor beta-1 (TGF-beta-1); mechanisms triggering deglycosylation-driven activation of TGF-beta-1 are however unclear.

The protein localises to the secreted. The protein resides in the extracellular space. Its subcellular location is the extracellular matrix. Transforming growth factor beta-1 proprotein: Precursor of the Latency-associated peptide (LAP) and Transforming growth factor beta-1 (TGF-beta-1) chains, which constitute the regulatory and active subunit of TGF-beta-1, respectively. Functionally, required to maintain the Transforming growth factor beta-1 (TGF-beta-1) chain in a latent state during storage in extracellular matrix. Associates non-covalently with TGF-beta-1 and regulates its activation via interaction with 'milieu molecules', such as LTBP1, LRRC32/GARP and LRRC33/NRROS, that control activation of TGF-beta-1. Interaction with LRRC33/NRROS regulates activation of TGF-beta-1 in macrophages and microglia. Interaction with LRRC32/GARP controls activation of TGF-beta-1 on the surface of activated regulatory T-cells (Tregs). Interaction with integrins (ITGAV:ITGB6 or ITGAV:ITGB8) results in distortion of the Latency-associated peptide chain and subsequent release of the active TGF-beta-1. In terms of biological role, multifunctional protein that regulates the growth and differentiation of various cell types and is involved in various processes, such as normal development, immune function, microglia function and responses to neurodegeneration. Activation into mature form follows different steps: following cleavage of the proprotein in the Golgi apparatus, Latency-associated peptide (LAP) and Transforming growth factor beta-1 (TGF-beta-1) chains remain non-covalently linked rendering TGF-beta-1 inactive during storage in extracellular matrix. At the same time, LAP chain interacts with 'milieu molecules', such as LTBP1, LRRC32/GARP and LRRC33/NRROS that control activation of TGF-beta-1 and maintain it in a latent state during storage in extracellular milieus. TGF-beta-1 is released from LAP by integrins (ITGAV:ITGB6 or ITGAV:ITGB8): integrin-binding to LAP stabilizes an alternative conformation of the LAP bowtie tail and results in distortion of the LAP chain and subsequent release of the active TGF-beta-1. Once activated following release of LAP, TGF-beta-1 acts by binding to TGF-beta receptors (TGFBR1 and TGFBR2), which transduce signal. While expressed by many cells types, TGF-beta-1 only has a very localized range of action within cell environment thanks to fine regulation of its activation by Latency-associated peptide chain (LAP) and 'milieu molecules'. Plays an important role in bone remodeling: acts as a potent stimulator of osteoblastic bone formation, causing chemotaxis, proliferation and differentiation in committed osteoblasts. Can promote either T-helper 17 cells (Th17) or regulatory T-cells (Treg) lineage differentiation in a concentration-dependent manner. At high concentrations, leads to FOXP3-mediated suppression of RORC and down-regulation of IL-17 expression, favoring Treg cell development. At low concentrations in concert with IL-6 and IL-21, leads to expression of the IL-17 and IL-23 receptors, favoring differentiation to Th17 cells. Stimulates sustained production of collagen through the activation of CREB3L1 by regulated intramembrane proteolysis (RIP). Mediates SMAD2/3 activation by inducing its phosphorylation and subsequent translocation to the nucleus. Positively regulates odontoblastic differentiation in dental papilla cells, via promotion of IPO7-mediated translocation of phosphorylated SMAD2 to the nucleus and subsequent transcription of target genes. Can induce epithelial-to-mesenchymal transition (EMT) and cell migration in various cell types. This chain is Transforming growth factor beta-1 proprotein (TGFB1), found in Equus caballus (Horse).